The chain runs to 106 residues: Venom family 8-like peptide Pr8a (106 aa).

The first 17 residues, 1 to 17, serve as a signal peptide directing secretion; it reads MSPIAFLLPFLLQMVLS.

Contains 2 disulfide bonds. Expressed by the venom gland (anterior main gland) (at protein level).

The protein resides in the secreted. The sequence is that of Venom family 8-like peptide Pr8a from Platymeris rhadamanthus (Red spot assassin bug).